A 671-amino-acid polypeptide reads, in one-letter code: E3 ubiquitin-protein ligase pub2 (671 aa).

One can recognise a C2 domain in the interval 1 to 112; it reads MENIRFEVQL…KDDYKTRITL (112 aa). In terms of domain architecture, WW spans 242 to 275; that stretch reads GPLPAGWEMRLSEDYHVYFVDHSTKTTTWSDPRD. An HECT domain is found at 338 to 671; the sequence is SVSDMKKKLL…IQETAGFGTE (334 aa). Residue cysteine 639 is the Glycyl thioester intermediate of the active site.

In terms of assembly, interacts with the E2 ubiquitin-conjugating enzyme ubc4.

The protein resides in the membrane. It localises to the cytoplasm. It carries out the reaction S-ubiquitinyl-[E2 ubiquitin-conjugating enzyme]-L-cysteine + [acceptor protein]-L-lysine = [E2 ubiquitin-conjugating enzyme]-L-cysteine + N(6)-ubiquitinyl-[acceptor protein]-L-lysine.. The protein operates within protein modification; protein ubiquitination. Functionally, E3 ubiquitin-protein ligase which accepts ubiquitin from an E2 ubiquitin-conjugating enzyme in the form of a thioester and then directly transfers the ubiquitin to targeted substrates. This is E3 ubiquitin-protein ligase pub2 (pub2) from Schizosaccharomyces pombe (strain 972 / ATCC 24843) (Fission yeast).